The sequence spans 382 residues: MELVAGSYEQVLFGFTVQRGPAKSGHQETWTPVADFTHHSHTASLSVLASNSRYVVSGSKDETIHIYDMKRKVEHGALVHHAGTVTCLKFHGNQHLISGAEDGHICIWDVKRWKCLKTFKAHRGHVTFLSIHPSGKLALSVGTDKTLRTWNLIEGRSAFIKNIKENAHIVEWSPSGGKYIVVVQNKVDVYRLGTASVSGTITNGKRISSVTFLSDSVLAVAGDEEVVRIFDCDSLECLCEFRAHENRVKDMVSFEVPDHHVLVTASNDGFIKMWTLPQDKKVPPSLLCEAKTGARLTCLTVWLDRAANGMASLPPAAEPCPDQPKTIEKESGDTVQEETSEPNSEKSDVSGDSKQPTKGNSPVTAKKRKMATMSEKKRKKKM.

5 WD repeats span residues 37–77 (THHS…EHGA), 80–120 (HHAG…KTFK), 122–160 (HRGH…SAFI), 202–240 (TNGK…CLCE), and 243–284 (AHEN…KVPP). The disordered stretch occupies residues 313 to 382 (LPPAAEPCPD…MSEKKRKKKM (70 aa)). Positions 352–363 (DSKQPTKGNSPV) are enriched in polar residues. Positions 365–382 (AKKRKMATMSEKKRKKKM) are enriched in basic residues.

As to quaternary structure, interacts with PAK1.

The protein resides in the nucleus. The protein localises to the nucleolus. In terms of biological role, negatively regulates the PAK1 kinase. PAK1 is a member of the PAK kinase family, which has been shown to play a positive role in the regulation of signaling pathways involving MAPK8 and RELA. PAK1 exists as an inactive homodimer, which is activated by binding of small GTPases such as CDC42 to an N-terminal regulatory domain. PAK1IP1 also binds to the N-terminus of PAK1, and inhibits the specific activation of PAK1 by CDC42. May be involved in ribosomal large subunit assembly. This Mus musculus (Mouse) protein is p21-activated protein kinase-interacting protein 1 (Pak1ip1).